We begin with the raw amino-acid sequence, 91 residues long: Transcriptional repressor FrmR (91 aa).

Belongs to the FrmR/RcnR family. In terms of assembly, homotetramer.

It localises to the cytoplasm. Formaldehyde sensor. In the absence of formaldehyde, mediates repression of the frmRAB operon. Acts by binding directly to the frmRAB promoter region. In the presence of formaldehyde, it dissociates from the frmRAB promoter region and allows expression of the formaldehyde detoxification system encoded by frmA and frmB. The polypeptide is Transcriptional repressor FrmR (Escherichia coli (strain UTI89 / UPEC)).